The primary structure comprises 225 residues: Glutathione S-transferase U2 (225 aa).

A GST N-terminal domain is found at 6–85; sequence ESVKLLGFWI…YIDQTWNNNP (80 aa). Residues 16-17, 42-43, 56-57, and 69-70 each bind glutathione; these read SP, KK, KV, and ES. In terms of domain architecture, GST C-terminal spans 90 to 217; it reads DPYEKAMVRF…EKHIERMKKI (128 aa). A Phosphothreonine modification is found at T151.

Belongs to the GST superfamily. Tau family.

It is found in the cytoplasm. The protein resides in the cytosol. The enzyme catalyses RX + glutathione = an S-substituted glutathione + a halide anion + H(+). In terms of biological role, may be involved in the conjugation of reduced glutathione to a wide number of exogenous and endogenous hydrophobic electrophiles and have a detoxification role against certain herbicides. The protein is Glutathione S-transferase U2 (GSTU2) of Arabidopsis thaliana (Mouse-ear cress).